The following is a 207-amino-acid chain: Sodium/potassium-transporting ATPase subunit beta-1-interacting protein 1 (207 aa).

A run of 3 helical transmembrane segments spans residues 2 to 22 (GRCS…AAAL), 35 to 55 (APIL…LGTL), and 62 to 82 (LILY…IICF). The N-linked (GlcNAc...) asparagine glycan is linked to asparagine 100. A helical transmembrane segment spans residues 147 to 167 (ALSSALQIFLALFGFVYACYV).

It belongs to the NKAIN family. In terms of assembly, interacts with atp1b1 C-terminus.

The protein resides in the cell membrane. This is Sodium/potassium-transporting ATPase subunit beta-1-interacting protein 1 (nkain1) from Xenopus laevis (African clawed frog).